A 211-amino-acid chain; its full sequence is Mediator of RNA polymerase II transcription subunit 20 (211 aa).

The protein belongs to the Mediator complex subunit 20 family. In terms of assembly, component of the Mediator complex.

Its subcellular location is the nucleus. Its function is as follows. Component of the Mediator complex, a coactivator involved in the regulated transcription of nearly all RNA polymerase II-dependent genes. Mediator functions as a bridge to convey information from gene-specific regulatory proteins to the basal RNA polymerase II transcription machinery. Mediator is recruited to promoters by direct interactions with regulatory proteins and serves as a scaffold for the assembly of a functional preinitiation complex with RNA polymerase II and the general transcription factors. This is Mediator of RNA polymerase II transcription subunit 20 (med20) from Xenopus laevis (African clawed frog).